The following is a 110-amino-acid chain: Nucleotide-binding protein HI1146 homolog (110 aa).

Belongs to the RapZ-like family.

Functionally, displays ATPase and GTPase activities. This is Nucleotide-binding protein HI1146 homolog from Aggregatibacter actinomycetemcomitans (Actinobacillus actinomycetemcomitans).